The sequence spans 95 residues: L-amino-acid oxidase (95 aa).

The protein belongs to the flavin monoamine oxidase family. FIG1 subfamily. Homodimer; non-covalently linked. FAD serves as cofactor. N-glycosylated. Expressed by the venom gland.

The protein localises to the secreted. The enzyme catalyses an L-alpha-amino acid + O2 + H2O = a 2-oxocarboxylate + H2O2 + NH4(+). It carries out the reaction L-leucine + O2 + H2O = 4-methyl-2-oxopentanoate + H2O2 + NH4(+). The catalysed reaction is L-phenylalanine + O2 + H2O = 3-phenylpyruvate + H2O2 + NH4(+). It catalyses the reaction L-tryptophan + O2 + H2O = indole-3-pyruvate + H2O2 + NH4(+). The enzyme catalyses L-methionine + O2 + H2O = 4-methylsulfanyl-2-oxobutanoate + H2O2 + NH4(+). It carries out the reaction L-arginine + O2 + H2O = 5-guanidino-2-oxopentanoate + H2O2 + NH4(+). Functionally, catalyzes an oxidative deamination of predominantly hydrophobic and aromatic L-amino acids, thus producing hydrogen peroxide that may contribute to the diverse toxic effects of this enzyme. Is highly active on L-Met, L-Leu, L-Phe, L-Trp, and L-Arg, and no weakly or no active on L-His, L-Tyr, L-Ile, L-Gln, and L-Lys. Exhibits diverse biological activities, such as antibacterial activity against both Gram-positive (B.subtilis) and Gram-negative (E.coli) bacteria, and inhibition of ADP- or collagen-induced platelet aggregation. Effects of snake L-amino oxidases on platelets are controversial, since they either induce aggregation or inhibit agonist-induced aggregation. These different effects are probably due to different experimental conditions. This protein may also induce hemorrhage, hemolysis, edema, apoptosis, and have antiparasitic activities. The chain is L-amino-acid oxidase from Naja oxiana (Central Asian cobra).